Here is a 530-residue protein sequence, read N- to C-terminus: Glutamyl-tRNA reductase 2, chloroplastic (530 aa).

A chloroplast-targeting transit peptide spans 1–64 (MAVSSAFVVT…RCEISPSNKA (64 aa)). Residues 134 to 137 (TCNR), Ser-194, 199 to 201 (EGQ), and Gln-205 contribute to the substrate site. Cys-135 acts as the Nucleophile in catalysis. NADP(+) is bound at residue 277-282 (GAGKMG).

The protein belongs to the glutamyl-tRNA reductase family. As to expression, expressed in roots and flowers. Detected in leaves, hypocotyls and cotyledons.

Its subcellular location is the plastid. It localises to the chloroplast. The enzyme catalyses (S)-4-amino-5-oxopentanoate + tRNA(Glu) + NADP(+) = L-glutamyl-tRNA(Glu) + NADPH + H(+). It participates in porphyrin-containing compound metabolism; protoporphyrin-IX biosynthesis; 5-aminolevulinate from L-glutamyl-tRNA(Glu): step 1/2. It functions in the pathway porphyrin-containing compound metabolism; chlorophyll biosynthesis. Functionally, catalyzes the NADPH-dependent reduction of glutamyl-tRNA(Glu) to glutamate 1-semialdehyde (GSA). Probably involved in wound-induced supply of heme to defensive hemoproteins outside plastids. The chain is Glutamyl-tRNA reductase 2, chloroplastic (HEMA2) from Arabidopsis thaliana (Mouse-ear cress).